The primary structure comprises 339 residues: Heat-inducible transcription repressor HrcA (339 aa).

This sequence belongs to the HrcA family.

Its function is as follows. Negative regulator of class I heat shock genes (grpE-dnaK-dnaJ and groELS operons). Prevents heat-shock induction of these operons. This chain is Heat-inducible transcription repressor HrcA, found in Nitrosospira multiformis (strain ATCC 25196 / NCIMB 11849 / C 71).